The sequence spans 212 residues: uncharacterized protein (212 aa).

Residues G53, E74, and D97 each coordinate S-adenosyl-L-methionine.

This sequence belongs to the methyltransferase superfamily. YrrT family.

Could be a S-adenosyl-L-methionine-dependent methyltransferase. This is an uncharacterized protein from Bacillus cereus (strain ATCC 10987 / NRS 248).